We begin with the raw amino-acid sequence, 445 residues long: GTPase Obg (445 aa).

The Obg domain occupies 7–164 (PEFVDCVTVE…RKLRLEVKSI (158 aa)). Residues 165-342 (ADVALVGFPS…FTLRLGEICQ (178 aa)) form the OBG-type G domain. GTP is bound by residues 171 to 178 (GFPSVGKS), 196 to 200 (FTTLH), 217 to 220 (DVPG), 291 to 294 (NKID), and 323 to 325 (SAV). Mg(2+)-binding residues include Ser178 and Thr198. One can recognise an OCT domain in the interval 357-434 (IPAKNTPEFS…IGGVIFTWDP (78 aa)).

It belongs to the TRAFAC class OBG-HflX-like GTPase superfamily. OBG GTPase family. As to quaternary structure, monomer. Mg(2+) is required as a cofactor.

The protein resides in the cytoplasm. An essential GTPase which binds GTP, GDP and possibly (p)ppGpp with moderate affinity, with high nucleotide exchange rates and a fairly low GTP hydrolysis rate. Plays a role in control of the cell cycle, stress response, ribosome biogenesis and in those bacteria that undergo differentiation, in morphogenesis control. This Tropheryma whipplei (strain Twist) (Whipple's bacillus) protein is GTPase Obg.